Consider the following 373-residue polypeptide: C-C chemokine receptor type 2 (373 aa).

The Extracellular portion of the chain corresponds to methionine 1–alanine 55. The helical transmembrane segment at tryptophan 56–cysteine 83 threads the bilayer. Residues lysine 84–tyrosine 93 are Cytoplasmic-facing. The chain crosses the membrane as a helical span at residues leucine 94 to tyrosine 114. The Extracellular portion of the chain corresponds to alanine 115–lysine 127. Cysteine 126 and cysteine 203 are oxidised to a cystine. The chain crosses the membrane as a helical span at residues valine 128 to isoleucine 149. Over aspartate 150 to threonine 166 the chain is Cytoplasmic. Tyrosine 152 is modified (phosphotyrosine; by JAK2). Residues valine 167 to phenylalanine 191 traverse the membrane as a helical segment. Residues threonine 192–arginine 219 are Extracellular-facing. Residues asparagine 220 to leucine 239 form a helical membrane-spanning segment. Residues histidine 240–arginine 256 are Cytoplasmic-facing. The helical transmembrane segment at leucine 257–phenylalanine 281 threads the bilayer. Topologically, residues glutamine 282–glutamine 298 are extracellular. A helical transmembrane segment spans residues alanine 299–glycine 322. Topologically, residues glutamate 323–leucine 373 are cytoplasmic.

This sequence belongs to the G-protein coupled receptor 1 family. As to quaternary structure, interacts with ARRB1. Interacts (via extracellular N-terminal region) with beta-defensin DEFB106A/DEFB106B; this interaction may preferentially require specific tyrosine sulfation on CCR2. Interacts with NUP85; the interaction is required for CCR2 clusters formation on the cell membrane and CCR2 signaling. N-glycosylated. Post-translationally, sulfation increases the affinity for both monomeric and dimeric CCL2 with stronger binding to the monomeric form. Binding of sulfated CCR2 to CCL2 promotes conversion of CCL2 from dimer to monomer. Epressed in mature thymocytes. Detected in monocyte/macrophage cell lines, but not in nonhematopoietic cell lines.

Its subcellular location is the cell membrane. In terms of biological role, key functional receptor for CCL2 but can also bind CCL7 and CCL12 chemokines. Its binding with CCL2 on monocytes and macrophages mediates chemotaxis and migration induction through the activation of the PI3K cascade, the small G protein Rac and lamellipodium protrusion. Also acts as a receptor for the beta-defensin DEFB106A/DEFB106B. Regulates the expression of T-cell inflammatory cytokines and T-cell differentiation, promoting the differentiation of T-cells into T-helper 17 cells (Th17) during inflammation. Facilitates the export of mature thymocytes by enhancing directional movement of thymocytes to sphingosine-1-phosphate stimulation and up-regulation of S1P1R expression; signals through the JAK-STAT pathway to regulate FOXO1 activity leading to an increased expression of S1P1R. Plays an important role in mediating peripheral nerve injury-induced neuropathic pain. Increases NMDA-mediated synaptic transmission in both dopamine D1 and D2 receptor-containing neurons, which may be caused by MAPK/ERK-dependent phosphorylation of GRIN2B/NMDAR2B. Mediates the recruitment of macrophages and monocytes to the injury site following brain injury. The sequence is that of C-C chemokine receptor type 2 (Ccr2) from Mus musculus (Mouse).